The sequence spans 501 residues: Lysine--tRNA ligase (501 aa).

Residues glutamate 412 and glutamate 419 each contribute to the Mg(2+) site.

The protein belongs to the class-II aminoacyl-tRNA synthetase family. Homodimer. Mg(2+) is required as a cofactor.

The protein resides in the cytoplasm. It catalyses the reaction tRNA(Lys) + L-lysine + ATP = L-lysyl-tRNA(Lys) + AMP + diphosphate. This chain is Lysine--tRNA ligase, found in Dechloromonas aromatica (strain RCB).